The sequence spans 273 residues: Diadenylate cyclase (273 aa).

The next 3 membrane-spanning stretches (helical) occupy residues 12–32 (LANIVDILVVWFVIYKVIMLI), 37–57 (AVQLLKGIFIIIAVKLLSGFF), and 61–81 (TVEWITDQMLTWGFLAIIIIF). Residues 82-242 (QPELRRALET…GGELFRDVSE (161 aa)) enclose the DAC domain.

It belongs to the adenylate cyclase family. DacA/CdaA subfamily. As to quaternary structure, probably a homodimer.

Its subcellular location is the cell membrane. The enzyme catalyses 2 ATP = 3',3'-c-di-AMP + 2 diphosphate. Its function is as follows. Catalyzes the condensation of 2 ATP molecules into cyclic di-AMP (c-di-AMP), a signaling compound secreted into the host's cytosol where it triggers the cytosolic surveillance pathway (CSP), a host pathway of innate immunity characterized by expression of beta interferon (IFN-beta) and coregulated genes. Overexpression increases export of c-di-AMP. c-di-AMP is a second messenger that mediates growth, cell wall stability and virulence. The polypeptide is Diadenylate cyclase (Listeria monocytogenes serotype 1/2a (strain 10403S)).